The chain runs to 535 residues: Pentatricopeptide repeat-containing protein At5g16420, mitochondrial (535 aa).

A mitochondrion-targeting transit peptide spans 1–28; sequence MFLSRVNPTRFPPFVASRRLFSASASAA. 12 PPR repeats span residues 82–112, 119–153, 154–189, 190–224, 225–259, 260–294, 295–329, 330–364, 365–395, 399–433, 434–468, and 469–503; these read NYDT…LRNS, GENL…GVKR, SVRS…GITP, NIFT…GLVP, NLVT…GWYP, DATT…EIEP, NEVT…SFMP, DSSL…NCMP, DNAL…FEKG, SLLT…KCKP, NAFT…GCFP, and NKTT…GKVD.

It belongs to the PPR family. P subfamily.

The protein localises to the mitochondrion. The chain is Pentatricopeptide repeat-containing protein At5g16420, mitochondrial from Arabidopsis thaliana (Mouse-ear cress).